Reading from the N-terminus, the 1400-residue chain is ABC transporter G family member 30 (1400 aa).

The N-linked (GlcNAc...) asparagine glycan is linked to Asn116. The 274-residue stretch at 141 to 414 (LLSEFICSKK…FEEFGFKCPE (274 aa)) folds into the ABC transporter 1 domain. Position 174 to 181 (174 to 181 (GPPGCGKT)) interacts with ATP. Asn472 carries an N-linked (GlcNAc...) asparagine glycan. In terms of domain architecture, ABC transmembrane type-2 1 spans 492–704 (EMLKACSRRE…AEIGLTANEF (213 aa)). Helical transmembrane passes span 510-530 (FIYLFKSALLVFNALVTMTVF), 553-573 (LFRLLADGLPELTLTISRLGV), 582-602 (FYPAWAYAIPSIILKIPLSVL), 628-648 (FLILSTFNLSCVSMFRAIAAI), 652-672 (IIASTITGAISILVLSLFGGF), 679-699 (MPAWLGWGFWLSPLSYAEIGL), and 738-758 (TAFGALVGFVLFFNALYVLAL). Residues 808 to 1053 (VTFQNVQYYI…VIEYFESFSG (246 aa)) form the ABC transporter 2 domain. ATP is bound at residue 845-852 (GVSGAGKT). Residues Asn899 and Asn1040 are each glycosylated (N-linked (GlcNAc...) asparagine). Positions 1125 to 1339 (VQLKACLWKQ…VLEGLLSSQY (215 aa)) constitute an ABC transmembrane type-2 2 domain. Transmembrane regions (helical) follow at residues 1144-1164 (HNITRIVFILLDSTLCGLLFW), 1179-1199 (IFGSMYTLVVFPGMNNCAAVI), 1228-1248 (VLIEVPYSLLQSLLCTIIVYP), 1263-1283 (LYSIFCSLLIFNYSGMLMVAL), 1289-1309 (MAVTLRSSFFSMLNLFAGFVI), 1317-1337 (WWIWMYYLSPTSWVLEGLLSS), and 1372-1392 (VVAFVLIAYPIIVATLFAFFM).

It belongs to the ABC transporter superfamily. ABCG family. PDR (TC 3.A.1.205) subfamily. As to expression, confined to roots. In seeds, mainly expressed in the embryo and, to a lesser extent, in the endosperm.

The protein resides in the cell membrane. The enzyme catalyses abscisate(out) + ATP + H2O = abscisate(in) + ADP + phosphate + H(+). Functionally, together with ABCG40, import into the embryo the abscisic acid (ABA) delivered from the endosperm via ABCG25 and ABCG31-mediated export to suppress radicle extension and subsequent embryonic growth. Involved in root secretion of phytochemicals (phenolics and sugars) which regulate soil microbiota, influencing both fungal and bacterial communities. May be a general defense protein. This Arabidopsis thaliana (Mouse-ear cress) protein is ABC transporter G family member 30.